A 159-amino-acid polypeptide reads, in one-letter code: ATP synthase subunit b 2 (159 aa).

A helical membrane pass occupies residues 1–21 (MDATFWAFIALVIFVAIVVYM).

The protein belongs to the ATPase B chain family. In terms of assembly, F-type ATPases have 2 components, F(1) - the catalytic core - and F(0) - the membrane proton channel. F(1) has five subunits: alpha(3), beta(3), gamma(1), delta(1), epsilon(1). F(0) has three main subunits: a(1), b(2) and c(10-14). The alpha and beta chains form an alternating ring which encloses part of the gamma chain. F(1) is attached to F(0) by a central stalk formed by the gamma and epsilon chains, while a peripheral stalk is formed by the delta and b chains.

The protein localises to the cell inner membrane. F(1)F(0) ATP synthase produces ATP from ADP in the presence of a proton or sodium gradient. F-type ATPases consist of two structural domains, F(1) containing the extramembraneous catalytic core and F(0) containing the membrane proton channel, linked together by a central stalk and a peripheral stalk. During catalysis, ATP synthesis in the catalytic domain of F(1) is coupled via a rotary mechanism of the central stalk subunits to proton translocation. Functionally, component of the F(0) channel, it forms part of the peripheral stalk, linking F(1) to F(0). This chain is ATP synthase subunit b 2, found in Brucella suis (strain ATCC 23445 / NCTC 10510).